We begin with the raw amino-acid sequence, 630 residues long: Sodium-dependent serotonin transporter (630 aa).

Polar residues-rich tracts occupy residues 1–11 (METTPLNSQKV) and 42–55 (QISN…STSA). A disordered region spans residues 1-63 (METTPLNSQK…SAGDEAPHST (63 aa)). At 1-87 (METTPLNSQK…ERETWGKKMD (87 aa)) the chain is on the cytoplasmic side. Tyrosine 47 carries the post-translational modification Phosphotyrosine. Residues 88–112 (FLLSVIGYAVDLGNIWRFPYICYQN) traverse the membrane as a helical segment. Positions 94, 96, 97, 98, and 101 each coordinate Na(+). Aspartate 98 contacts serotonin. Residues 113-115 (GGG) lie on the Extracellular side of the membrane. A helical transmembrane segment spans residues 116–135 (AFLLPYTIMAIFGGIPLFYM). The Cytoplasmic segment spans residues 136–160 (ELALGQYHRNGCISIWKKICPIFKG). Tyrosine 142 bears the Phosphotyrosine mark. A helical transmembrane segment spans residues 161-186 (IGYAICIIAFYIASYYNTIIAWALYY). Residues 187–252 (LISSFTDQLP…KGLQDLGTIS (66 aa)) lie on the Extracellular side of the membrane. Residues cysteine 200 and cysteine 209 are joined by a disulfide bond. 2 N-linked (GlcNAc...) asparagine glycosylation sites follow: asparagine 208 and asparagine 217. A helical transmembrane segment spans residues 253-271 (WQLALCIMLIFTIIYFSIW). At 272–277 (KGVKTS) the chain is on the cytoplasmic side. Threonine 276 bears the Phosphothreonine mark. The chain crosses the membrane as a helical span at residues 278 to 297 (GKVVWVTATFPYIVLSVLLV). The Extracellular portion of the chain corresponds to 298–324 (RGATLPGAWRGVVFYLKPNWQKLLETG). Residues 325 to 347 (VWVDAAAQIFFSLGPGFGVLLAF) form a helical membrane-spanning segment. Serine 336 contacts Na(+). Over 348 to 360 (ASYNKFNNNCYQD) the chain is Cytoplasmic. A helical membrane pass occupies residues 361 to 380 (ALVTSVVNCMTSFVSGFVIF). Asparagine 368 is a Na(+) binding site. Residues 381–421 (TVLGYMAEMRNEDVSEVAKDAGPSLLFITYAEAIANMPAST) lie on the Extracellular side of the membrane. The chain crosses the membrane as a helical span at residues 422–443 (FFAIIFFLMLITLGLDSTFAGL). Residues leucine 434, aspartate 437, and serine 438 each contribute to the Na(+) site. Residue threonine 439 participates in serotonin binding. Residues 444–463 (EGVITAVLDEFPHIWAKRRE) lie on the Cytoplasmic side of the membrane. A helical transmembrane segment spans residues 464–483 (WFVLIVVITCILGSLLTLTS). The Extracellular portion of the chain corresponds to 484–494 (GGAYVVTLLEE). Serotonin is bound by residues glutamate 494 and tyrosine 495. Residues 495–516 (YATGPAVLTVALIEAVVVSWFY) form a helical membrane-spanning segment. At 517-538 (GITQFCSDVKEMLGFSPGWFWR) the chain is on the cytoplasmic side. The chain crosses the membrane as a helical span at residues 539 to 558 (ICWVAISPLFLLFIICSFLM). Serotonin contacts are provided by phenylalanine 556 and serine 559. Residues 559-574 (SPPQLRLFQYNYPHWS) are Extracellular-facing. The chain crosses the membrane as a helical span at residues 575–595 (IILGYCIGTSSVICIPIYIIY). The Cytoplasmic portion of the chain corresponds to 596–630 (RLISTPGTLKERIIKSITPETPTEIPCGDIRMNAV). Positions 616–624 (TPTEIPCGD) are interaction with RAB4A.

Belongs to the sodium:neurotransmitter symporter (SNF) (TC 2.A.22) family. SLC6A4 subfamily. In terms of assembly, monomer or homooligomer. Interacts (via C-terminus) with SCAMP2; the interaction is direct and retains transporter molecules intracellularly. Interacts with filamentous actin and STX1A. Interacts (via the N-terminus) with STX1A (via the H3 domain); this interaction regulates SLC4A6 channel conductance. Interacts with SEC23A, SEC24C and PATJ. Interacts with NOS1; the interaction may diminish the cell surface localization of SERT in the brain and, correspondingly, reduce serotonin reuptake. Interacts with TGFB1I1. Interacts with ITGAV:ITGB3. Interacts (via C-terminus) with ITGB3; this interaction regulates SLC6A4 trafficking. Phosphorylation at Thr-276 increases 5-HT uptake and is required for cGMP-mediated SERT regulation. Expressed in the lung, midbrain and brainstem regions. Expressed in brainstem raphe neurons.

It localises to the cell membrane. It is found in the endomembrane system. The protein localises to the endosome membrane. The protein resides in the synapse. Its subcellular location is the cell junction. It localises to the focal adhesion. It is found in the cell projection. The protein localises to the neuron projection. It carries out the reaction serotonin(out) + K(+)(in) + Na(+)(out) + H(+)(in) = serotonin(in) + K(+)(out) + Na(+)(in) + H(+)(out). Its function is as follows. Serotonin transporter that cotransports serotonin with one Na(+) ion in exchange for one K(+) ion and possibly one proton in an overall electroneutral transport cycle. Transports serotonin across the plasma membrane from the extracellular compartment to the cytosol thus limiting serotonin intercellular signaling. Essential for serotonin homeostasis in the central nervous system. In the developing somatosensory cortex, acts in glutamatergic neurons to control serotonin uptake and its trophic functions accounting for proper spatial organization of cortical neurons and elaboration of sensory circuits. In the mature cortex, acts primarily in brainstem raphe neurons to mediate serotonin uptake from the synaptic cleft back into the pre-synaptic terminal thus terminating serotonin signaling at the synapse. Modulates mucosal serotonin levels in the gastrointestinal tract through uptake and clearance of serotonin in enterocytes. Required for enteric neurogenesis and gastrointestinal reflexes. Regulates blood serotonin levels by ensuring rapid high affinity uptake of serotonin from plasma to platelets, where it is further stored in dense granules via vesicular monoamine transporters and then released upon stimulation. Mechanistically, the transport cycle starts with an outward-open conformation having Na1(+) and Cl(-) sites occupied. The binding of a second extracellular Na2(+) ion and serotonin substrate leads to structural changes to outward-occluded to inward-occluded to inward-open, where the Na2(+) ion and serotonin are released into the cytosol. Binding of intracellular K(+) ion induces conformational transitions to inward-occluded to outward-open and completes the cycle by releasing K(+) possibly together with a proton bound to Asp-98 into the extracellular compartment. Na1(+) and Cl(-) ions remain bound throughout the transport cycle. Additionally, displays serotonin-induced channel-like conductance for monovalent cations, mainly Na(+) ions. The channel activity is uncoupled from the transport cycle and may contribute to the membrane resting potential or excitability. This Mus musculus (Mouse) protein is Sodium-dependent serotonin transporter.